An 87-amino-acid polypeptide reads, in one-letter code: Small ribosomal subunit protein bS20 (87 aa).

The protein belongs to the bacterial ribosomal protein bS20 family.

In terms of biological role, binds directly to 16S ribosomal RNA. This chain is Small ribosomal subunit protein bS20, found in Halothermothrix orenii (strain H 168 / OCM 544 / DSM 9562).